A 95-amino-acid polypeptide reads, in one-letter code: MARKRTLGGKAPQAGNKVSHSQRKTRRQWMPNIQTKALWSITLGQSVKVTISTSALRSVDNAGGLDNYLLKILPSELTPSMRRVARQIRERKAAA.

The segment at 1–28 (MARKRTLGGKAPQAGNKVSHSQRKTRRQ) is disordered.

The protein belongs to the bacterial ribosomal protein bL28 family.

In Magnetococcus marinus (strain ATCC BAA-1437 / JCM 17883 / MC-1), this protein is Large ribosomal subunit protein bL28.